A 280-amino-acid polypeptide reads, in one-letter code: Pantothenate synthetase (280 aa).

Methionine 32–histidine 39 contributes to the ATP binding site. Histidine 39 functions as the Proton donor in the catalytic mechanism. Glutamine 63 is a (R)-pantoate binding site. Residue glutamine 63 coordinates beta-alanine. Glycine 149–aspartate 152 is a binding site for ATP. Glutamine 155 is a (R)-pantoate binding site. Residues valine 178 and methionine 186 to arginine 189 contribute to the ATP site.

This sequence belongs to the pantothenate synthetase family. In terms of assembly, homodimer.

The protein localises to the cytoplasm. The catalysed reaction is (R)-pantoate + beta-alanine + ATP = (R)-pantothenate + AMP + diphosphate + H(+). Its pathway is cofactor biosynthesis; (R)-pantothenate biosynthesis; (R)-pantothenate from (R)-pantoate and beta-alanine: step 1/1. Functionally, catalyzes the condensation of pantoate with beta-alanine in an ATP-dependent reaction via a pantoyl-adenylate intermediate. This Ruegeria sp. (strain TM1040) (Silicibacter sp.) protein is Pantothenate synthetase.